The following is a 639-amino-acid chain: Extracellular metalloproteinase NpIII (639 aa).

The N-terminal stretch at 1–16 (MHMLLFIGALALPVFV) is a signal peptide. Positions 17–245 (CTQSCEPASL…IHGVVDYVSE (229 aa)) are excised as a propeptide. Asn-287, Asn-320, Asn-336, and Asn-368 each carry an N-linked (GlcNAc...) asparagine glycan. His-429 provides a ligand contact to Zn(2+). Glu-430 is an active-site residue. His-433 serves as a coordination point for Zn(2+). N-linked (GlcNAc...) asparagine glycosylation is present at Asn-509.

The protein belongs to the peptidase M36 family. Zn(2+) is required as a cofactor.

The protein localises to the secreted. In terms of biological role, secreted metalloproteinase that allows assimilation of proteinaceous substrates. In Aspergillus oryzae (strain ATCC 42149 / RIB 40) (Yellow koji mold), this protein is Extracellular metalloproteinase NpIII (NpIII).